The primary structure comprises 487 residues: ATP synthase subunit beta (487 aa).

Position 164–171 (164–171 (GGAGVGKT)) interacts with ATP.

The protein belongs to the ATPase alpha/beta chains family. F-type ATPases have 2 components, CF(1) - the catalytic core - and CF(0) - the membrane proton channel. CF(1) has five subunits: alpha(3), beta(3), gamma(1), delta(1), epsilon(1). CF(0) has four main subunits: a(1), b(1), b'(1) and c(9-12).

The protein resides in the cellular thylakoid membrane. It catalyses the reaction ATP + H2O + 4 H(+)(in) = ADP + phosphate + 5 H(+)(out). Its function is as follows. Produces ATP from ADP in the presence of a proton gradient across the membrane. The catalytic sites are hosted primarily by the beta subunits. The chain is ATP synthase subunit beta from Synechococcus sp. (strain WH7803).